Consider the following 377-residue polypeptide: Succinyl-diaminopimelate desuccinylase (377 aa).

Residue histidine 75 participates in Zn(2+) binding. Aspartate 77 is a catalytic residue. Aspartate 106 lines the Zn(2+) pocket. Catalysis depends on glutamate 136, which acts as the Proton acceptor. Positions 137, 165, and 350 each coordinate Zn(2+).

This sequence belongs to the peptidase M20A family. DapE subfamily. As to quaternary structure, homodimer. Zn(2+) is required as a cofactor. Requires Co(2+) as cofactor.

It catalyses the reaction N-succinyl-(2S,6S)-2,6-diaminopimelate + H2O = (2S,6S)-2,6-diaminopimelate + succinate. It participates in amino-acid biosynthesis; L-lysine biosynthesis via DAP pathway; LL-2,6-diaminopimelate from (S)-tetrahydrodipicolinate (succinylase route): step 3/3. Functionally, catalyzes the hydrolysis of N-succinyl-L,L-diaminopimelic acid (SDAP), forming succinate and LL-2,6-diaminopimelate (DAP), an intermediate involved in the bacterial biosynthesis of lysine and meso-diaminopimelic acid, an essential component of bacterial cell walls. The sequence is that of Succinyl-diaminopimelate desuccinylase from Sphingopyxis alaskensis (strain DSM 13593 / LMG 18877 / RB2256) (Sphingomonas alaskensis).